Consider the following 301-residue polypeptide: Probable tRNA pseudouridine synthase B (301 aa).

Residue Asp-54 is the Nucleophile of the active site. A PUA domain is found at Leu-227–Val-301.

The protein belongs to the pseudouridine synthase TruB family. Type 2 subfamily.

It catalyses the reaction uridine(55) in tRNA = pseudouridine(55) in tRNA. Could be responsible for synthesis of pseudouridine from uracil-55 in the psi GC loop of transfer RNAs. In Halobacterium salinarum (strain ATCC 29341 / DSM 671 / R1), this protein is Probable tRNA pseudouridine synthase B.